We begin with the raw amino-acid sequence, 346 residues long: Elongation factor 1-alpha (346 aa).

The 127-residue stretch at 1–127 (GTSQADVALL…DNVEPPKRPS (127 aa)) folds into the tr-type G domain. 49–52 (NKMD) serves as a coordination point for GTP.

It belongs to the TRAFAC class translation factor GTPase superfamily. Classic translation factor GTPase family. EF-Tu/EF-1A subfamily.

The protein localises to the cytoplasm. Functionally, this protein promotes the GTP-dependent binding of aminoacyl-tRNA to the A-site of ribosomes during protein biosynthesis. The protein is Elongation factor 1-alpha of Eimeria bovis.